We begin with the raw amino-acid sequence, 480 residues long: Uridine/deoxyuridine transporter (480 aa).

14 helical membrane passes run 14–34 (VGSI…FQLN), 55–75 (SIAL…LFLP), 93–113 (LTMI…LMIG), 115–135 (ILQG…HVKV), 147–167 (ILTS…GWLV), 174–194 (SVFF…SFGT), 207–227 (WTGV…VNAL), 239–259 (WLLA…FWQV), 280–300 (GLLI…NGII), 320–340 (LVTL…SGFL), 358–378 (IIGI…LLLL), 382–402 (FIGI…GIVL), 417–437 (GMFN…PTVL), and 449–469 (ISGI…SFLI).

Belongs to the major facilitator superfamily. EmrB family.

The protein resides in the cell membrane. Its function is as follows. Responsible for the uptake of uridine and deoxyuridine. Not involved in purine nucleoside uptake. This is Uridine/deoxyuridine transporter from Lactococcus lactis subsp. cremoris (strain MG1363).